The sequence spans 97 residues: MKLICSIYKSPRKDGMYLYVDKRDALKRVPEGLLAAFGAPQLAFELVLTPERQLAREDINKVLANIEAQGYHLQMPPAEDEYIEHLPEELLRMNDPM.

Residues 3 to 87 (LICSIYKSPR…AEDEYIEHLP (85 aa)) enclose the YcgL domain.

The polypeptide is YcgL domain-containing protein PST_1364 (Stutzerimonas stutzeri (strain A1501) (Pseudomonas stutzeri)).